The primary structure comprises 692 residues: Elongation factor G (692 aa).

Residues Glu-8–Thr-282 form the tr-type G domain. GTP contacts are provided by residues Ala-17–Thr-24, Asp-81–His-85, and Asn-135–Asp-138. The segment at Pro-285–Asp-304 is disordered. Positions Val-290–Asp-304 are enriched in basic and acidic residues.

The protein belongs to the TRAFAC class translation factor GTPase superfamily. Classic translation factor GTPase family. EF-G/EF-2 subfamily.

It is found in the cytoplasm. Its function is as follows. Catalyzes the GTP-dependent ribosomal translocation step during translation elongation. During this step, the ribosome changes from the pre-translocational (PRE) to the post-translocational (POST) state as the newly formed A-site-bound peptidyl-tRNA and P-site-bound deacylated tRNA move to the P and E sites, respectively. Catalyzes the coordinated movement of the two tRNA molecules, the mRNA and conformational changes in the ribosome. The polypeptide is Elongation factor G (Desulfitobacterium hafniense (strain DSM 10664 / DCB-2)).